A 537-amino-acid chain; its full sequence is Eukaryotic translation initiation factor 3 subunit L (537 aa).

The span at M1 to R19 shows a compositional bias: basic and acidic residues. The tract at residues M1 to D30 is disordered. The region spanning E299–P487 is the PCI domain.

The protein belongs to the eIF-3 subunit L family. Component of the eukaryotic translation initiation factor 3 (eIF-3) complex.

It is found in the cytoplasm. Component of the eukaryotic translation initiation factor 3 (eIF-3) complex, which is involved in protein synthesis of a specialized repertoire of mRNAs and, together with other initiation factors, stimulates binding of mRNA and methionyl-tRNAi to the 40S ribosome. The eIF-3 complex specifically targets and initiates translation of a subset of mRNAs involved in cell proliferation. The chain is Eukaryotic translation initiation factor 3 subunit L from Caenorhabditis elegans.